Reading from the N-terminus, the 361-residue chain is Probable cinnamyl alcohol dehydrogenase (361 aa).

Cys-48 lines the Zn(2+) pocket. Thr-50 serves as a coordination point for NADP(+). 7 residues coordinate Zn(2+): His-70, Glu-71, Cys-101, Cys-104, Cys-107, Cys-115, and Cys-164. NADP(+) contacts are provided by residues Thr-168, 189-194 (GLGGVG), 212-217 (SSSDKK), Thr-252, Gly-276, and 299-301 (SFI).

This sequence belongs to the zinc-containing alcohol dehydrogenase family. Homodimer. The cofactor is Zn(2+).

It carries out the reaction (E)-cinnamyl alcohol + NADP(+) = (E)-cinnamaldehyde + NADPH + H(+). It catalyses the reaction (E)-coniferol + NADP(+) = (E)-coniferaldehyde + NADPH + H(+). The catalysed reaction is (E)-sinapyl alcohol + NADP(+) = (E)-sinapaldehyde + NADPH + H(+). The enzyme catalyses (E)-4-coumaroyl alcohol + NADP(+) = (E)-4-coumaraldehyde + NADPH + H(+). It carries out the reaction (E)-caffeyl alcohol + NADP(+) = (E)-caffeyl aldehyde + NADPH + H(+). Its pathway is aromatic compound metabolism; phenylpropanoid biosynthesis. Its function is as follows. Involved in lignin biosynthesis. Catalyzes the final step specific for the production of lignin monomers. Catalyzes the NADPH-dependent reduction of coniferaldehyde, 5-hydroxyconiferaldehyde, sinapaldehyde, 4-coumaraldehyde and caffeyl aldehyde to their respective alcohols. This is Probable cinnamyl alcohol dehydrogenase from Lolium perenne (Perennial ryegrass).